The chain runs to 301 residues: Recombination-associated protein RdgC (301 aa).

Belongs to the RdgC family.

It localises to the cytoplasm. It is found in the nucleoid. Functionally, may be involved in recombination. This is Recombination-associated protein RdgC from Xanthomonas axonopodis pv. citri (strain 306).